The sequence spans 164 residues: UPF0114 protein Sbal_0780 (164 aa).

Transmembrane regions (helical) follow at residues 15 to 35 (IMAPIYLGLSLILFALGVKFF), 53 to 73 (LVLLTLSLIDITLVGGLIVMV), 109 to 129 (VAASIVAISSIHLLKVFMNAE), and 136 to 156 (IMWYLLIHITFVLSAFAMGYL).

The protein belongs to the UPF0114 family.

The protein resides in the cell membrane. The polypeptide is UPF0114 protein Sbal_0780 (Shewanella baltica (strain OS155 / ATCC BAA-1091)).